The chain runs to 602 residues: Probable translation initiation factor IF-2 (602 aa).

In terms of domain architecture, tr-type G spans 10–227; the sequence is LRQPIVVVLG…LLAGLTQNYM (218 aa). The G1 stretch occupies residues 19–26; the sequence is GHVDHGKT. 19-26 serves as a coordination point for GTP; sequence GHVDHGKT. The tract at residues 44 to 48 is G2; it reads EMTQE. A G3 region spans residues 83–86; it reads DTPG. GTP is bound by residues 83 to 87 and 137 to 140; these read DTPGH and NKID. Residues 137-140 form a G4 region; that stretch reads NKID. The G5 stretch occupies residues 205–207; sequence SAK.

Belongs to the TRAFAC class translation factor GTPase superfamily. Classic translation factor GTPase family. IF-2 subfamily.

Its function is as follows. Function in general translation initiation by promoting the binding of the formylmethionine-tRNA to ribosomes. Seems to function along with eIF-2. In Sulfurisphaera tokodaii (strain DSM 16993 / JCM 10545 / NBRC 100140 / 7) (Sulfolobus tokodaii), this protein is Probable translation initiation factor IF-2.